Reading from the N-terminus, the 202-residue chain is 3-isopropylmalate dehydratase small subunit (202 aa).

Belongs to the LeuD family. LeuD type 1 subfamily. In terms of assembly, heterodimer of LeuC and LeuD.

It catalyses the reaction (2R,3S)-3-isopropylmalate = (2S)-2-isopropylmalate. It functions in the pathway amino-acid biosynthesis; L-leucine biosynthesis; L-leucine from 3-methyl-2-oxobutanoate: step 2/4. Its function is as follows. Catalyzes the isomerization between 2-isopropylmalate and 3-isopropylmalate, via the formation of 2-isopropylmaleate. The protein is 3-isopropylmalate dehydratase small subunit of Rhizobium etli (strain CIAT 652).